The sequence spans 365 residues: Cobalt-precorrin-5B C(1)-methyltransferase (365 aa).

It belongs to the CbiD family.

It catalyses the reaction Co-precorrin-5B + S-adenosyl-L-methionine = Co-precorrin-6A + S-adenosyl-L-homocysteine. It participates in cofactor biosynthesis; adenosylcobalamin biosynthesis; cob(II)yrinate a,c-diamide from sirohydrochlorin (anaerobic route): step 6/10. In terms of biological role, catalyzes the methylation of C-1 in cobalt-precorrin-5B to form cobalt-precorrin-6A. The protein is Cobalt-precorrin-5B C(1)-methyltransferase of Clostridium perfringens (strain 13 / Type A).